A 943-amino-acid polypeptide reads, in one-letter code: Centromere protein C (943 aa).

Lys45 participates in a covalent cross-link: Glycyl lysine isopeptide (Lys-Gly) (interchain with G-Cter in SUMO2). Positions Cys70 to Lys91 are disordered. Phosphoserine is present on residues Ser73 and Ser96. Residue Lys119 forms a Glycyl lysine isopeptide (Lys-Gly) (interchain with G-Cter in SUMO2) linkage. Thr130 is subject to Phosphothreonine. Residue Lys134 forms a Glycyl lysine isopeptide (Lys-Gly) (interchain with G-Cter in SUMO2) linkage. A Phosphoserine modification is found at Ser146. Residue Lys180 forms a Glycyl lysine isopeptide (Lys-Gly) (interchain with G-Cter in SUMO2) linkage. Thr183 carries the post-translational modification Phosphothreonine. Ser189 bears the Phosphoserine mark. Residues Lys212 and Lys217 each participate in a glycyl lysine isopeptide (Lys-Gly) (interchain with G-Cter in SUMO2) cross-link. The segment covering Val224 to Pro239 has biased composition (basic and acidic residues). A disordered region spans residues Val224–Ser250. The residue at position 225 (Ser225) is a Phosphoserine. Residues Lys238 and Lys260 each participate in a glycyl lysine isopeptide (Lys-Gly) (interchain with G-Cter in SUMO2) cross-link. Residues Lys259 to Lys273 carry the Nuclear localization signal motif. Ser261 is subject to Phosphoserine. Residues Lys271, Lys273, and Lys297 each participate in a glycyl lysine isopeptide (Lys-Gly) (interchain with G-Cter in SUMO2) cross-link. 4 positions are modified to phosphoserine: Ser316, Ser333, Ser376, and Ser397. Residues Leu358–Asp377 form a disordered region. The segment at Tyr403 to Val513 is disordered. The segment covering Arg412–Met426 has biased composition (basic residues). 2 stretches are compositionally biased toward basic and acidic residues: residues Gln438–Glu463 and Thr488–Pro510. At Ser439 the chain carries Phosphoserine. A Glycyl lysine isopeptide (Lys-Gly) (interchain with G-Cter in SUMO2) cross-link involves residue Lys440. The Nuclear localization signal motif lies at Lys484–Arg499. At Ser528 the chain carries Phosphoserine. Lys534 is covalently cross-linked (Glycyl lysine isopeptide (Lys-Gly) (interchain with G-Cter in SUMO2)). Disordered stretches follow at residues Glu537–Gly587 and Asp632–Lys717. Phosphoserine is present on Ser538. The short motif at Arg558–Lys574 is the Nuclear localization signal element. Positions Asn570 to Thr583 are enriched in basic residues. A compositionally biased stretch (polar residues) spans Cys633 to Asp672. A Glycyl lysine isopeptide (Lys-Gly) (interchain with G-Cter in SUMO2) cross-link involves residue Lys677. Phosphoserine is present on residues Ser684, Ser709, and Ser710. The segment covering Val706–Gln715 has biased composition (basic and acidic residues). Lys727 is covalently cross-linked (Glycyl lysine isopeptide (Lys-Gly) (interchain with G-Cter in SUMO2)). Thr734 is subject to Phosphothreonine. Positions Val737–Gln759 are MIF2 homology domain II. A phosphoserine mark is found at Ser763 and Ser773. The Nuclear localization signal motif lies at Lys780–Arg798. Residue Lys807 forms a Glycyl lysine isopeptide (Lys-Gly) (interchain with G-Cter in SUMO2) linkage. Positions Leu890–Arg943 are MIF2 homology domain III.

This sequence belongs to the CENP-C/MIF2 family. As to quaternary structure, oligomer. Component of the CENPA-NAC complex, at least composed of CENPA, CENPC, CENPH, CENPM, CENPN, CENPT and CENPU. The CENPA-NAC complex interacts with the CENPA-CAD complex, composed of CENPI, CENPK, CENPL, CENPO, CENPP, CENPQ, CENPR and CENPS. Binds to DAXX. Interacts with DNMT3B. Interacts directly with CENPA. Identified in a centromere complex containing histones H2A, H2B and H4, and at least CENPA, CENPB, CENPC, CENPT, CENPN, HJURP, SUPT16H, SSRP1 and RSF1. Interacts with MEIKIN.

It localises to the nucleus. Its subcellular location is the chromosome. The protein resides in the centromere. It is found in the kinetochore. Functionally, component of the CENPA-NAC (nucleosome-associated) complex, a complex that plays a central role in assembly of kinetochore proteins, mitotic progression and chromosome segregation. The CENPA-NAC complex recruits the CENPA-CAD (nucleosome distal) complex and may be involved in incorporation of newly synthesized CENPA into centromeres. CENPC recruits DNA methylation and DNMT3B to both centromeric and pericentromeric satellite repeats and regulates the histone code in these regions. In Homo sapiens (Human), this protein is Centromere protein C (CENPC).